We begin with the raw amino-acid sequence, 629 residues long: MGVGGSFWDLLKPYARHEGAGYLRGRRVAVDLSFWVVSHSAAIRARSPHARLPHLRTLFFRTLSLFSKMGAFPVFVVDGQPSPLKSQVRAARFFRGSGMDLAALPSTEAEASADALVQPRNAKFTRYVEDCVELLEYLGMPVLRAKGEGEALCAQLNNQGHVDACITSDSDAFLFGAKTVIKVLRSNCKEPFECYNMADIESGLGLKRKQMVAMALLVGSDHDLHGVPGFGPETALRFVQLFDEDNVLAKLYEIGKGVYPFIGVSAPNIDDLPSPSTKSLPRARSPHCSHCGHPGNKKNHIKDGCNFCLVDSLENCVEKPAGFICECPSCDKARDLKVQRRNENWQIKVCKRIAAETNFPNEEIINLYLNDDNLDNENGVPLLTWNKPDMEILVDFLSFKQNWEPAYIRQRMLPMLSTIYLREMASSQSKSFLLYDQYKFHSIQRIKIRYGHPYYLVKWKRVTRSMISNDPPSKQTELEGKNDKVEVLDGDDEVVDEEEEEPTMISETTELLDEPDVPQVLDDDKDCFLLTDEDIELVNAAFPDEAQRFQEEQRLKEAKSIARKSKLNVAGFETPKGPRPSGVQLSIKEFYRSKKGLSGDSGKDGSRKSSDVDLSKNLPKSVRRRLLFD.

The interval Met-1–Gln-87 is N-domain. Residues Gly-2–Gly-98 form an XPG-N domain region. Mg(2+) contacts are provided by Asp-31, Asp-78, Glu-148, Glu-150, Asp-169, Asp-171, and Asp-221. The segment at Glu-136–Asp-221 is XPG-I domain. Positions Glu-136–His-225 are I-domain. The interval Asp-221–Leu-421 is 5'-3' exonuclease domain. Residues Lys-594 to Asn-617 form a disordered region. Residues Ser-601 to Leu-614 show a composition bias toward basic and acidic residues.

Belongs to the XPG/RAD2 endonuclease family. GEN subfamily. As to quaternary structure, monomer. Interacts with PCNA. PCNA stimulates the nuclease activity without altering cleavage specificity. Mg(2+) serves as cofactor. As to expression, highly expressed in anthers. Expressed in roots and leaves.

The protein localises to the nucleus. Endonuclease which cleaves flap structures at the junction between single-stranded DNA and double-stranded DNA. Possesses both single-stranded and double-stranded DNA-binding activities. Involved in early microspore development, but does not alter meiosis or tapetal cells development. Possesses Holliday junction (HJ) resolvase activity in vitro. Cleaves HJ at symmetrically related sites of the branch point. This chain is Flap endonuclease GEN-like 1, found in Oryza sativa subsp. japonica (Rice).